Consider the following 433-residue polypeptide: GTPase Obg (433 aa).

Residues 1–159 (MAFRDVLDIE…RRVRLELRLI (159 aa)) enclose the Obg domain. The OBG-type G domain maps to 160 to 327 (ADVGLVGYPN…LRQALFDLLP (168 aa)). ATP contacts are provided by residues 166–173 (GYPNAGKS), 191–195 (FTTLS), 214–217 (DIPG), 280–283 (NKIE), and 308–310 (SAK). Positions 173 and 193 each coordinate Mg(2+). An OCT domain is found at 342 to 430 (PEEVREEPLT…IGSFRFEYYA (89 aa)).

The protein belongs to the TRAFAC class OBG-HflX-like GTPase superfamily. OBG GTPase family. Monomer. It depends on Mg(2+) as a cofactor.

It localises to the cytoplasm. In terms of biological role, an essential GTPase which binds GTP, GDP and possibly (p)ppGpp with moderate affinity, with high nucleotide exchange rates and a fairly low GTP hydrolysis rate. Plays a role in control of the cell cycle, stress response, ribosome biogenesis and in those bacteria that undergo differentiation, in morphogenesis control. The sequence is that of GTPase Obg from Deinococcus geothermalis (strain DSM 11300 / CIP 105573 / AG-3a).